The primary structure comprises 283 residues: Protein FAM170B (283 aa).

Residues 1 to 11 (MKCYFTDHRGE) are compositionally biased toward basic and acidic residues. 2 disordered regions span residues 1–58 (MKCY…REEG) and 246–283 (AQGQ…QEKQ).

It belongs to the FAM170 family. Interacts with GOPC. As to expression, exclusively expressed in adult testis.

The protein localises to the cytoplasmic vesicle. It is found in the secretory vesicle. It localises to the acrosome. The protein resides in the acrosome outer membrane. Functionally, plays a role in fertilization through the acrosome reaction. The sequence is that of Protein FAM170B from Homo sapiens (Human).